Consider the following 842-residue polypeptide: Glucans biosynthesis glucosyltransferase H (842 aa).

Helical transmembrane passes span 140-160, 194-214, 513-533, 568-588, 615-635, 656-676, and 680-700; these read ILLL…KTIL, ILIL…TALM, VFLT…FLAL, IALF…SIIL, VLLA…AFLG, FMRH…MAWL, and FLFW…VSAI.

This sequence belongs to the glycosyltransferase 2 family. OpgH subfamily.

The protein resides in the cell inner membrane. It participates in glycan metabolism; osmoregulated periplasmic glucan (OPG) biosynthesis. Involved in the biosynthesis of osmoregulated periplasmic glucans (OPGs). The protein is Glucans biosynthesis glucosyltransferase H of Klebsiella pneumoniae subsp. pneumoniae (strain ATCC 700721 / MGH 78578).